The primary structure comprises 263 residues: NH(3)-dependent NAD(+) synthetase (263 aa).

An ATP-binding site is contributed by 29-36; sequence GISGGIDS. D35 contributes to the Mg(2+) binding site. R114 contributes to the deamido-NAD(+) binding site. T134 is a binding site for ATP. A Mg(2+)-binding site is contributed by E139. K147 and D154 together coordinate deamido-NAD(+). The ATP site is built by K163 and S185. 244-245 is a deamido-NAD(+) binding site; sequence HK.

This sequence belongs to the NAD synthetase family. In terms of assembly, homodimer.

The catalysed reaction is deamido-NAD(+) + NH4(+) + ATP = AMP + diphosphate + NAD(+) + H(+). It participates in cofactor biosynthesis; NAD(+) biosynthesis; NAD(+) from deamido-NAD(+) (ammonia route): step 1/1. In terms of biological role, catalyzes the ATP-dependent amidation of deamido-NAD to form NAD. Uses ammonia as a nitrogen source. The protein is NH(3)-dependent NAD(+) synthetase of Methanococcoides burtonii (strain DSM 6242 / NBRC 107633 / OCM 468 / ACE-M).